Consider the following 401-residue polypeptide: 8-amino-7-oxononanoate synthase (401 aa).

Arg-24 contacts substrate. Pyridoxal 5'-phosphate is bound at residue 111-112 (GF). His-137 is a binding site for substrate. Residues Ser-183, His-211, and Thr-240 each coordinate pyridoxal 5'-phosphate. N6-(pyridoxal phosphate)lysine is present on Lys-243. Thr-357 is a binding site for substrate.

Belongs to the class-II pyridoxal-phosphate-dependent aminotransferase family. BioF subfamily. As to quaternary structure, homodimer. It depends on pyridoxal 5'-phosphate as a cofactor.

It catalyses the reaction 6-carboxyhexanoyl-[ACP] + L-alanine + H(+) = (8S)-8-amino-7-oxononanoate + holo-[ACP] + CO2. Its pathway is cofactor biosynthesis; biotin biosynthesis. Its function is as follows. Catalyzes the decarboxylative condensation of pimeloyl-[acyl-carrier protein] and L-alanine to produce 8-amino-7-oxononanoate (AON), [acyl-carrier protein], and carbon dioxide. In Xylella fastidiosa (strain M12), this protein is 8-amino-7-oxononanoate synthase.